A 446-amino-acid chain; its full sequence is Palmitoyltransferase PFA4 (446 aa).

Topologically, residues 1–8 (MAVQLKWP) are cytoplasmic. A helical transmembrane segment spans residues 9-29 (ILGVIIPCIIIFSLSYGSHYF). Residues 30–40 (ILRHHLTMKQQ) lie on the Lumenal side of the membrane. A helical transmembrane segment spans residues 41–61 (LIYEFYVTMIWISYLLAIYTN). Residues 62-161 (PGRVPKNYKP…GNNNLPHFMR (100 aa)) are Cytoplasmic-facing. In terms of domain architecture, DHHC spans 114-164 (RYCKKCNNYKPPRSHHCKICQQCVLQMDHHCPWTLNCVGNNNLPHFMRFLG). The active-site S-palmitoyl cysteine intermediate is Cys144. Residues 162–182 (FLGWIIWGTGYLMIQLIKLII) form a helical membrane-spanning segment. Over 183–201 (NYYENSNMPHYLFNKTELV) the chain is Lumenal. Residues 202–222 (AIIAITPLNFFVFASILVLFI) form a helical membrane-spanning segment. At 223 to 446 (RCLINICKGM…TDFGVDEDSD (224 aa)) the chain is on the cytoplasmic side.

It belongs to the DHHC palmitoyltransferase family. PFA4 subfamily.

It localises to the endoplasmic reticulum membrane. It carries out the reaction L-cysteinyl-[protein] + hexadecanoyl-CoA = S-hexadecanoyl-L-cysteinyl-[protein] + CoA. Mediates the reversible addition of palmitate to target proteins, thereby regulating their membrane association and biological function. This is Palmitoyltransferase PFA4 from Candida albicans (strain SC5314 / ATCC MYA-2876) (Yeast).